The following is a 56-amino-acid chain: Calsequestrin-1 (56 aa).

Tyr-9 is subject to Phosphotyrosine. Position 47 is a phosphoserine (Ser-47).

The protein belongs to the calsequestrin family. Monomer; increases in response to a depletion of intracellular calcium. Homodimer. Homotetramer and homopolymer. Can form linear homooligomers. Ca(2+) ions promote oligomerization. Interacts (via C-terminal end and preferentially with the monomeric form) with STIM1; this interaction increases in response to a depletion of intracellular calcium, decreases both STIM1 aggregation and clustering, interaction of STIM1 with ORAI1 and store-operated Ca(2+) entry (SOCE) activity. Interacts with ASPH and TRDN. N-glycosylated.

It is found in the endoplasmic reticulum. Its subcellular location is the sarcoplasmic reticulum. The protein localises to the sarcoplasmic reticulum lumen. It localises to the sarcoplasmic reticulum membrane. The protein resides in the mitochondrion matrix. Its function is as follows. Calsequestrin is a high-capacity, moderate affinity, calcium-binding protein and thus acts as an internal calcium store in muscle. Calcium ions are bound by clusters of acidic residues at the protein surface, often at the interface between subunits. Can bind around 80 Ca(2+) ions. Regulates the release of lumenal Ca(2+) via the calcium release channel RYR1; this plays an important role in triggering muscle contraction. Negatively regulates store-operated Ca(2+) entry (SOCE) activity. This Canis lupus familiaris (Dog) protein is Calsequestrin-1 (CASQ1).